The primary structure comprises 197 residues: MEINTHNAEILLSAANKSHYPQDDIPEIALAGRSNVGKSSFINTMLNRKNLARTSGKPGKTQLLNFFNIDDKLRFVDVPGYGYAKVSKTERAKWGRMIEEYLTSRENLRAVVSLVDLRHEPSADDVQMYEFLKYYEIPVILVATKADKIPRGKWNKHESAIKKKLNFDQADTFILFSSVDKTGLDASWDAILEKVNK.

An EngB-type G domain is found at 24–197 (DIPEIALAGR…WDAILEKVNK (174 aa)). GTP is bound by residues 32–39 (GRSNVGKS), 59–63 (GKTQL), 77–80 (DVPG), 144–147 (TKAD), and 176–178 (FSS). S39 and T61 together coordinate Mg(2+).

Belongs to the TRAFAC class TrmE-Era-EngA-EngB-Septin-like GTPase superfamily. EngB GTPase family. The cofactor is Mg(2+).

Necessary for normal cell division and for the maintenance of normal septation. In Streptococcus gordonii (strain Challis / ATCC 35105 / BCRC 15272 / CH1 / DL1 / V288), this protein is Probable GTP-binding protein EngB.